Reading from the N-terminus, the 93-residue chain is Conotoxin Mr105 (93 aa).

An N-terminal signal peptide occupies residues 1-22 (MQRGAVLLGVVALLVLWPQAGA). Residues 23–33 (ELYDVNDPDVR) constitute a propeptide that is removed on maturation.

It belongs to the F superfamily. In terms of processing, contains 4 disulfide bonds. In terms of tissue distribution, expressed by the venom duct.

The protein localises to the secreted. This chain is Conotoxin Mr105, found in Conus marmoreus (Marble cone).